We begin with the raw amino-acid sequence, 104 residues long: Cytochrome c-551 (104 aa).

Residues 1-22 form the signal peptide; that stretch reads MKPYALLSLLATGTLLAQGAWA. Heme c is bound by residues Cys34, Cys37, His38, and Met83.

Post-translationally, binds 1 heme c group covalently per subunit.

The protein localises to the periplasm. In terms of biological role, electron donor for cytochrome cd1 in nitrite and nitrate respiration. This chain is Cytochrome c-551 (nirM), found in Pseudomonas aeruginosa (strain ATCC 15692 / DSM 22644 / CIP 104116 / JCM 14847 / LMG 12228 / 1C / PRS 101 / PAO1).